A 79-amino-acid chain; its full sequence is Acyl carrier protein (79 aa).

The Carrier domain maps to 2-77; it reads SDIEARVKKI…LAIDYAKNNV (76 aa). Ser-37 carries the post-translational modification O-(pantetheine 4'-phosphoryl)serine.

Belongs to the acyl carrier protein (ACP) family. Post-translationally, 4'-phosphopantetheine is transferred from CoA to a specific serine of apo-ACP by AcpS. This modification is essential for activity because fatty acids are bound in thioester linkage to the sulfhydryl of the prosthetic group.

The protein localises to the cytoplasm. It participates in lipid metabolism; fatty acid biosynthesis. In terms of biological role, carrier of the growing fatty acid chain in fatty acid biosynthesis. The sequence is that of Acyl carrier protein from Leptothrix cholodnii (strain ATCC 51168 / LMG 8142 / SP-6) (Leptothrix discophora (strain SP-6)).